The primary structure comprises 103 residues: Small ribosomal subunit protein uS10 (103 aa).

The protein belongs to the universal ribosomal protein uS10 family. Part of the 30S ribosomal subunit.

Functionally, involved in the binding of tRNA to the ribosomes. This is Small ribosomal subunit protein uS10 from Tolumonas auensis (strain DSM 9187 / NBRC 110442 / TA 4).